The following is a 187-amino-acid chain: Threonylcarbamoyl-AMP synthase (187 aa).

One can recognise a YrdC-like domain in the interval 4–187 (NHTDDPFLLD…GHSGQTIRDN (184 aa)). Residues 168-187 (GSRSPSKIRHGHSGQTIRDN) form a disordered region.

This sequence belongs to the SUA5 family. TsaC subfamily.

The protein localises to the cytoplasm. The enzyme catalyses L-threonine + hydrogencarbonate + ATP = L-threonylcarbamoyladenylate + diphosphate + H2O. Its function is as follows. Required for the formation of a threonylcarbamoyl group on adenosine at position 37 (t(6)A37) in tRNAs that read codons beginning with adenine. Catalyzes the conversion of L-threonine, HCO(3)(-)/CO(2) and ATP to give threonylcarbamoyl-AMP (TC-AMP) as the acyladenylate intermediate, with the release of diphosphate. In Pseudoalteromonas atlantica (strain T6c / ATCC BAA-1087), this protein is Threonylcarbamoyl-AMP synthase.